Consider the following 342-residue polypeptide: S-adenosylmethionine:tRNA ribosyltransferase-isomerase (342 aa).

This sequence belongs to the QueA family. In terms of assembly, monomer.

Its subcellular location is the cytoplasm. The enzyme catalyses 7-aminomethyl-7-carbaguanosine(34) in tRNA + S-adenosyl-L-methionine = epoxyqueuosine(34) in tRNA + adenine + L-methionine + 2 H(+). It participates in tRNA modification; tRNA-queuosine biosynthesis. Transfers and isomerizes the ribose moiety from AdoMet to the 7-aminomethyl group of 7-deazaguanine (preQ1-tRNA) to give epoxyqueuosine (oQ-tRNA). The chain is S-adenosylmethionine:tRNA ribosyltransferase-isomerase from Moorella thermoacetica (strain ATCC 39073 / JCM 9320).